A 293-amino-acid polypeptide reads, in one-letter code: UPF0282 protein MK0213 (293 aa).

This sequence belongs to the UPF0282 family.

In Methanopyrus kandleri (strain AV19 / DSM 6324 / JCM 9639 / NBRC 100938), this protein is UPF0282 protein MK0213.